Reading from the N-terminus, the 304-residue chain is Acetylglutamate kinase (304 aa).

Residues G82–G83, R104, and N197 contribute to the substrate site.

This sequence belongs to the acetylglutamate kinase family. ArgB subfamily.

It localises to the cytoplasm. It catalyses the reaction N-acetyl-L-glutamate + ATP = N-acetyl-L-glutamyl 5-phosphate + ADP. It participates in amino-acid biosynthesis; L-arginine biosynthesis; N(2)-acetyl-L-ornithine from L-glutamate: step 2/4. In terms of biological role, catalyzes the ATP-dependent phosphorylation of N-acetyl-L-glutamate. This Prochlorococcus marinus (strain SARG / CCMP1375 / SS120) protein is Acetylglutamate kinase.